A 147-amino-acid polypeptide reads, in one-letter code: UPF0306 protein YPK_3704 (147 aa).

This sequence belongs to the UPF0306 family.

The sequence is that of UPF0306 protein YPK_3704 from Yersinia pseudotuberculosis serotype O:3 (strain YPIII).